Here is an 82-residue protein sequence, read N- to C-terminus: Cytochrome b559 subunit alpha (82 aa).

A helical transmembrane segment spans residues V21–W35. A heme-binding site is contributed by H23.

Belongs to the PsbE/PsbF family. As to quaternary structure, heterodimer of an alpha subunit and a beta subunit. PSII is composed of 1 copy each of membrane proteins PsbA, PsbB, PsbC, PsbD, PsbE, PsbF, PsbH, PsbI, PsbJ, PsbK, PsbL, PsbM, PsbT, PsbX, PsbY, PsbZ, Psb30/Ycf12, at least 3 peripheral proteins of the oxygen-evolving complex and a large number of cofactors. It forms dimeric complexes. Requires heme b as cofactor.

The protein resides in the plastid. The protein localises to the chloroplast thylakoid membrane. In terms of biological role, this b-type cytochrome is tightly associated with the reaction center of photosystem II (PSII). PSII is a light-driven water:plastoquinone oxidoreductase that uses light energy to abstract electrons from H(2)O, generating O(2) and a proton gradient subsequently used for ATP formation. It consists of a core antenna complex that captures photons, and an electron transfer chain that converts photonic excitation into a charge separation. This is Cytochrome b559 subunit alpha from Ostreococcus tauri.